Consider the following 264-residue polypeptide: Small ribosomal subunit protein uS2 (264 aa).

The protein belongs to the universal ribosomal protein uS2 family.

The polypeptide is Small ribosomal subunit protein uS2 (Helicobacter pylori (strain Shi470)).